Consider the following 1177-residue polypeptide: DNA-directed RNA polymerase subunit beta (1177 aa).

The span at Asp-1147–Asp-1161 shows a compositional bias: acidic residues. The disordered stretch occupies residues Asp-1147–Glu-1177. Residues His-1162–Glu-1177 are compositionally biased toward basic and acidic residues.

The protein belongs to the RNA polymerase beta chain family. The RNAP catalytic core consists of 2 alpha, 1 beta, 1 beta' and 1 omega subunit. When a sigma factor is associated with the core the holoenzyme is formed, which can initiate transcription.

It carries out the reaction RNA(n) + a ribonucleoside 5'-triphosphate = RNA(n+1) + diphosphate. Its function is as follows. DNA-dependent RNA polymerase catalyzes the transcription of DNA into RNA using the four ribonucleoside triphosphates as substrates. This Bacillus anthracis (strain A0248) protein is DNA-directed RNA polymerase subunit beta.